The primary structure comprises 348 residues: Lipoyl synthase, mitochondrial (348 aa).

Cysteine 105, cysteine 110, cysteine 116, cysteine 136, cysteine 140, and cysteine 143 together coordinate [4Fe-4S] cluster. A Radical SAM core domain is found at 121–341; it reads ETGTATATIM…RTXXLVSYVL (221 aa).

The protein belongs to the radical SAM superfamily. Lipoyl synthase family. Requires [4Fe-4S] cluster as cofactor.

It is found in the mitochondrion. The catalysed reaction is [[Fe-S] cluster scaffold protein carrying a second [4Fe-4S](2+) cluster] + N(6)-octanoyl-L-lysyl-[protein] + 2 oxidized [2Fe-2S]-[ferredoxin] + 2 S-adenosyl-L-methionine + 4 H(+) = [[Fe-S] cluster scaffold protein] + N(6)-[(R)-dihydrolipoyl]-L-lysyl-[protein] + 4 Fe(3+) + 2 hydrogen sulfide + 2 5'-deoxyadenosine + 2 L-methionine + 2 reduced [2Fe-2S]-[ferredoxin]. It functions in the pathway protein modification; protein lipoylation via endogenous pathway; protein N(6)-(lipoyl)lysine from octanoyl-[acyl-carrier-protein]: step 2/2. Its function is as follows. Catalyzes the radical-mediated insertion of two sulfur atoms into the C-6 and C-8 positions of the octanoyl moiety bound to the lipoyl domains of lipoate-dependent enzymes, thereby converting the octanoylated domains into lipoylated derivatives. The polypeptide is Lipoyl synthase, mitochondrial (LIP1) (Ricinus communis (Castor bean)).